The primary structure comprises 208 residues: FMN-dependent NADH:quinone oxidoreductase (208 aa).

FMN contacts are provided by residues Ser-9, 15 to 17 (SVS), 96 to 99 (MYNF), and 140 to 143 (TRGG).

Belongs to the azoreductase type 1 family. As to quaternary structure, homodimer. It depends on FMN as a cofactor.

It catalyses the reaction 2 a quinone + NADH + H(+) = 2 a 1,4-benzosemiquinone + NAD(+). The enzyme catalyses N,N-dimethyl-1,4-phenylenediamine + anthranilate + 2 NAD(+) = 2-(4-dimethylaminophenyl)diazenylbenzoate + 2 NADH + 2 H(+). Functionally, quinone reductase that provides resistance to thiol-specific stress caused by electrophilic quinones. Also exhibits azoreductase activity. Catalyzes the reductive cleavage of the azo bond in aromatic azo compounds to the corresponding amines. This is FMN-dependent NADH:quinone oxidoreductase from Azospirillum brasilense.